The primary structure comprises 60 residues: Large ribosomal subunit protein eL37 (60 aa).

Zn(2+)-binding residues include Cys-19, Cys-22, Cys-34, and Cys-37. The C4-type zinc finger occupies 19–37 (CRRCGRMSYHKRHKICSSC).

This sequence belongs to the eukaryotic ribosomal protein eL37 family. Zn(2+) is required as a cofactor.

Functionally, binds to the 23S rRNA. This Methanospirillum hungatei JF-1 (strain ATCC 27890 / DSM 864 / NBRC 100397 / JF-1) protein is Large ribosomal subunit protein eL37.